Reading from the N-terminus, the 1384-residue chain is Protein Gawky (1384 aa).

Disordered regions lie at residues 1-99 (MREA…VWTG), 148-227 (NGSS…DPRG), 263-335 (TAST…DDGT), and 447-501 (VGAP…SGWS). A required for interaction with AGO1 region spans residues 1-205 (MREALFSQDG…HRGGNGSGAT (205 aa)). Sufficient for miRNA-mediated silencing regions lie at residues 1–605 (MREA…SLGS) and 605–830 (SYAD…SVHL). Residues 15 to 24 (HVNQDTNWEV) are compositionally biased toward polar residues. Positions 150 to 171 (SSNITGSSGVATGSSGNSSNAG) are enriched in low complexity. The minimal N-terminal region required for miRNA-mediated silencing stretch occupies residues 205–490 (TSSDPRDIRM…GVSWGNKQSK (286 aa)). Positions 208–225 (DPRDIRMIDPRDPIRGDP) are enriched in basic and acidic residues. 2 stretches are compositionally biased toward polar residues: residues 449 to 475 (APSS…NSWS) and 485 to 501 (GNKQ…SGWS). Residues 547–588 (IIKQSKQYRILVENGFKKEDVERALVIANMNIEEAADMLRAN) enclose the UBA domain. 7 disordered regions span residues 607–626 (ADHN…PVNS), 809–841 (QNMQ…LRGH), 889–942 (TEFS…NKDW), 962–1022 (EPGK…LSSS), 1052–1102 (TSPL…GVQT), 1188–1221 (SENE…GVGT), and 1318–1368 (GTAN…PSGR). A compositionally biased stretch (low complexity) spans 809-826 (QNMQPTSQQQQPQQQQLP). Positions 862–1115 (YQGASNQQSR…NWTGGNTTWG (254 aa)) are not required for interaction with AGO1 or miRNAs or for localization to P-bodies but necessary for miRNA-mediated silencing and for interaction with pAbp. The segment covering 898–924 (TKQNLTANTSNINSLGLQNDSTWSTGR) has biased composition (polar residues). A sufficient for miRNA-mediated silencing region spans residues 940–1215 (KDWSVAQPTS…TSSSGTSGGN (276 aa)). Low complexity predominate over residues 1010–1022 (SPTDLPPLSLSSS). The segment covering 1052-1061 (TSPLNKSSSR) has biased composition (polar residues). Low complexity predominate over residues 1068 to 1084 (TANSNKSANSNASTPTT). In terms of domain architecture, RRM spans 1117 to 1189 (SWLLLKNLTA…TTIFAESPSE (73 aa)). Residues 1188-1203 (SENEVQSIMQHLPQTP) are compositionally biased toward polar residues. The interval 1200–1384 (PQTPSSTSSS…ISLVYSIVDD (185 aa)) is not required for interaction with AGO1 or miRNAs or for localization to P-bodies but necessary for miRNA-mediated silencing, dissociation from AGO1 and miRNAs and interaction with pAbp. Positions 1211 to 1220 (TSGGNVGGVG) are enriched in gly residues. Over residues 1318-1349 (GTANSSGSKSSANNLASGQSSASNLTNSTNST) the composition is skewed to low complexity. Polar residues predominate over residues 1350 to 1365 (WRQTSQNQALQSQSRP).

Belongs to the GW182 family. Component of the miRNA-directed RNA-induced silencing complex (miRISC), composed of at least AGO1 and gw, which bind mature miRNAs and targets the selective destruction of homologous RNAs. Interacts (via N-terminal region) with AGO1 (via Piwi domain); the interaction is essential for localization of AGO1 in P-bodies and for miRNA-mediated silencing. Interacts with pAbp/PABPC1; this interaction interferes with the binding of pAbp to eIF4G and is required for miRNA-mediated silencing. Interacts with CCR4-NOT complex members Not1, Rga/NOT2, twin/CCR4, Pop2 and NOT3/5 and with PAN complex members CG8232/PAN2 and CG11486/PAN3.

It localises to the cytoplasm. It is found in the P-body. Required for gene silencing mediated by micro-RNAs (miRNAs). Silences both polyadenylated and deadenylated mRNAs. Required for miRNA-mediated translational repression and mRNA decay. Not required for miRNA target recognition. Necessary to initiate but not to maintain silencing. Promotes mRNA deadenylation through the recruitment of the CCR4-NOT and PAN complexes and promotes decapping by the DCP1-DCP2 complex. Dissociates from silenced mRNAs after deadenylation. Required for completion of nuclear divisions during early embryonic development. The polypeptide is Protein Gawky (Drosophila melanogaster (Fruit fly)).